The sequence spans 194 residues: Potassium-transporting ATPase KdpC subunit (194 aa).

Residues 12–34 (LFLLLLTGGVYPLLTTALGQWWF) form a helical membrane-spanning segment.

This sequence belongs to the KdpC family. The system is composed of three essential subunits: KdpA, KdpB and KdpC.

It is found in the cell inner membrane. Functionally, part of the high-affinity ATP-driven potassium transport (or Kdp) system, which catalyzes the hydrolysis of ATP coupled with the electrogenic transport of potassium into the cytoplasm. This subunit acts as a catalytic chaperone that increases the ATP-binding affinity of the ATP-hydrolyzing subunit KdpB by the formation of a transient KdpB/KdpC/ATP ternary complex. In Salmonella enteritidis PT4 (strain P125109), this protein is Potassium-transporting ATPase KdpC subunit.